A 96-amino-acid polypeptide reads, in one-letter code: MSNIRPLHDRVVIRRVEEETKTAGGILLPGSAAEKPAQGEVIAVGNGQITENGVRALDVKAGDKVLFGTYAGTTVKVNGEEFLIMKESDILAVLEG.

Belongs to the GroES chaperonin family. Heptamer of 7 subunits arranged in a ring. Interacts with the chaperonin GroEL.

Its subcellular location is the cytoplasm. In terms of biological role, together with the chaperonin GroEL, plays an essential role in assisting protein folding. The GroEL-GroES system forms a nano-cage that allows encapsulation of the non-native substrate proteins and provides a physical environment optimized to promote and accelerate protein folding. GroES binds to the apical surface of the GroEL ring, thereby capping the opening of the GroEL channel. The protein is Co-chaperonin GroES of Acinetobacter baylyi (strain ATCC 33305 / BD413 / ADP1).